Reading from the N-terminus, the 194-residue chain is dITP/XTP pyrophosphatase (194 aa).

A substrate-binding site is contributed by 8-13 (TSNPGK). 2 residues coordinate Mg(2+): E38 and D67. Residue D67 is the Proton acceptor of the active site. Residues S68, 152 to 155 (FGYD), K175, and 180 to 181 (HR) each bind substrate.

This sequence belongs to the HAM1 NTPase family. In terms of assembly, homodimer. Requires Mg(2+) as cofactor.

It catalyses the reaction XTP + H2O = XMP + diphosphate + H(+). The catalysed reaction is dITP + H2O = dIMP + diphosphate + H(+). It carries out the reaction ITP + H2O = IMP + diphosphate + H(+). In terms of biological role, pyrophosphatase that catalyzes the hydrolysis of nucleoside triphosphates to their monophosphate derivatives, with a high preference for the non-canonical purine nucleotides XTP (xanthosine triphosphate), dITP (deoxyinosine triphosphate) and ITP. Seems to function as a house-cleaning enzyme that removes non-canonical purine nucleotides from the nucleotide pool, thus preventing their incorporation into DNA/RNA and avoiding chromosomal lesions. The chain is dITP/XTP pyrophosphatase from Legionella pneumophila (strain Lens).